The sequence spans 188 residues: Elongation factor P (188 aa).

The protein belongs to the elongation factor P family.

It is found in the cytoplasm. The protein operates within protein biosynthesis; polypeptide chain elongation. In terms of biological role, involved in peptide bond synthesis. Stimulates efficient translation and peptide-bond synthesis on native or reconstituted 70S ribosomes in vitro. Probably functions indirectly by altering the affinity of the ribosome for aminoacyl-tRNA, thus increasing their reactivity as acceptors for peptidyl transferase. In Bacteroides fragilis (strain ATCC 25285 / DSM 2151 / CCUG 4856 / JCM 11019 / LMG 10263 / NCTC 9343 / Onslow / VPI 2553 / EN-2), this protein is Elongation factor P.